A 247-amino-acid chain; its full sequence is Mast cell protease 2 (247 aa).

The first 19 residues, 1–19 (MHLLALHLLLFLLGSRAKA), serve as a signal peptide directing secretion. Positions 20-21 (GE) are cleaved as a propeptide — activation peptide. One can recognise a Peptidase S1 domain in the interval 22–245 (IIGGTECKPH…YRPWINKILR (224 aa)). A disulfide bridge connects residues Cys-51 and Cys-67. Catalysis depends on His-66, which acts as the Charge relay system. A glycan (N-linked (GlcNAc...) asparagine) is linked at Asn-80. The Charge relay system role is filled by Asp-110. Cystine bridges form between Cys-144–Cys-209 and Cys-175–Cys-188. The Charge relay system role is filled by Ser-203.

The protein belongs to the peptidase S1 family. Granzyme subfamily.

The protein is Mast cell protease 2 of Meriones unguiculatus (Mongolian jird).